A 451-amino-acid chain; its full sequence is NADP-specific glutamate dehydrogenase (451 aa).

Lys-113 is a catalytic residue. Ser-252 is subject to Phosphoserine.

This sequence belongs to the Glu/Leu/Phe/Val dehydrogenases family. In terms of assembly, homohexamer.

It carries out the reaction L-glutamate + NADP(+) + H2O = 2-oxoglutarate + NH4(+) + NADPH + H(+). The protein is NADP-specific glutamate dehydrogenase (gdh1) of Schizosaccharomyces pombe (strain 972 / ATCC 24843) (Fission yeast).